Here is a 245-residue protein sequence, read N- to C-terminus: Orotidine 5'-phosphate decarboxylase (245 aa).

Substrate contacts are provided by residues aspartate 22, lysine 44, 71–80, threonine 131, arginine 192, glutamine 201, glycine 221, and arginine 222; that span reads DLKFHDIPNT. Lysine 73 (proton donor) is an active-site residue.

Belongs to the OMP decarboxylase family. Type 1 subfamily. In terms of assembly, homodimer.

The catalysed reaction is orotidine 5'-phosphate + H(+) = UMP + CO2. It functions in the pathway pyrimidine metabolism; UMP biosynthesis via de novo pathway; UMP from orotate: step 2/2. Catalyzes the decarboxylation of orotidine 5'-monophosphate (OMP) to uridine 5'-monophosphate (UMP). The chain is Orotidine 5'-phosphate decarboxylase from Salmonella typhi.